The following is a 1040-amino-acid chain: Nucleotide-binding oligomerization domain-containing protein 2 (1040 aa).

CARD domains are found at residues 26 to 122 (CEMC…LHGC) and 126 to 218 (HSLH…EAAT). An ATG16L1-binding motif motif is present at residues 63–77 (WEVLSWEDYEGFHLL). ADP-binding residues include Thr239, Tyr252, Thr253, Gly302, Ser303, Gly304, Lys305, Ser306, and Thr307. A required for CARD9 binding region spans residues 241–274 (DGAETLCLEDIYTENVLEVWADVGMAGPPQKSPA). One can recognise an NACHT domain in the interval 293 to 618 (DTVLVVGEAG…FFAAFYLALS (326 aa)). Residue 299–306 (GEAGSGKS) coordinates ATP. Cys395 carries the S-palmitoyl cysteine lipid modification. An ADP-binding site is contributed by His603. LRR repeat units follow at residues 791–812 (RPVA…QLLP), 816–839 (VCKA…IECA), 844–865 (QLQK…SMAK), 872–884 (NFLA…NYIT), 900–920 (SLQF…QALA), 928–949 (SLRW…ALAL), 956–976 (MLEE…CSLA), 984–1005 (SLKI…ALLQ), and 1012–1032 (TILE…DKLG). Cys1033 carries S-palmitoyl cysteine lipidation.

The protein belongs to the NOD1-NOD2 family. As to quaternary structure, homooligomer: homooligomerizes following muramyl dipeptide (MDP)-binding, promoting RIPK2 recruitment. Interacts (via CARD domain) with RIPK2 (via CARD domain). Following RIPK2 recruitment, RIPK2 homooligomerizes via its CARD domain and forms long filaments named RIPosomes. Interacts (via CARD domain) with ubiquitin; inhibiting interaction with RIPK2. Component of a signaling complex consisting of ARHGEF2, NOD2 and RIPK2. Interacts with ANKRD17 (via N-terminus). Interacts with HSPA1A; the interaction enhances NOD2 stability. Interacts (via both CARD domains) with HSP90; the interaction enhances NOD2 stability. Interacts (via CARD domain) with SOCS3; the interaction promotes NOD2 degradation. Interacts (via CARD domain) with ERBIN; the interaction inhibits activation of NOD2. Interacts with MAPKBP1; the interaction is enhanced in the presence of muramyl dipeptide (MDP) and inhibits NOD2 homooligomerization and activation. Interacts with INAVA; the interaction takes place upon Pattern recognition receptor (PRR) stimulation. Interacts (via NACHT domain) with CARD9. Interacts (via CARD domain) with CASP1; this interaction leads to IL1B processing. Also interacts with CASP4. Interacts with NLRP1; this interaction is enhanced in the presence of muramyl dipeptide (MDP) and leads to increased IL1B release. Interacts with NLRP12; this interaction promotes degradation of NOD2 through the ubiquitin-proteasome pathway. Interacts with ANKHD1, C10orf67, CHMP5, DOCK7, ENTR1, KRT15, LDOC1, PPP1R12C, PPP2R3B, TRIM41 and VIM. Interacts with MAVS; interaction takes place following single-stranded RNA (ssRNA)-binding. Interacts with ATG16L1. Interacts with IRGM; promoting IRGM 'Lys-63'-linked polyubiquitination, which is required for interactions with the core autophagy factors. Post-translationally, palmitoylated by ZDHHC5; palmitoylation is required for proper recruitment to the bacterial entry site and hence for proper signaling upon cognate peptidoglycan detection. Palmitoylation promotes localization to the cell membrane. Palmitoylation protects from SQSTM1/p62-dependent autophagic degradation. Polyubiquitinated by TRIM27, leading to proteasome-mediated degradation. Polyubiquitinated and degraded following muramyl dipeptide (MDP) stimulation, conferring MDP tolerance and preventing septic shock. In terms of processing, degraded via selective autophagy following interaction with IRGM. IRGM promotes NOD2-RIPK2 RIPosome recruitment to autophagosome membranes, promoting their SQSTM1/p62-dependent autophagic degradation. Post-translationally, O-glycosylated by OGT, O-GlcNAcylation increases protein stability. In terms of tissue distribution, expressed in monocytes, macrophages, dendritic cells, hepatocytes, preadipocytes, epithelial cells of oral cavity, lung and intestine, with higher expression in ileal Paneth cells and in intestinal stem cells. As to expression, expressed at higher level in leukocytes.

It localises to the cell membrane. The protein localises to the basolateral cell membrane. The protein resides in the cytoplasm. Its subcellular location is the mitochondrion. Its activity is regulated as follows. ADP-binding promotes an inactive closed conformation. Pattern recognition receptor (PRR) that detects bacterial peptidoglycan fragments and other danger signals and plays an important role in gastrointestinal immunity. Specifically activated by muramyl dipeptide (MDP), a fragment of bacterial peptidoglycan found in every bacterial peptidoglycan type. NOD2 specifically recognizes and binds 6-O-phospho-MDP, the phosphorylated form of MDP, which is generated by NAGK. 6-O-phospho-MDP-binding triggers oligomerization that facilitates the binding and subsequent activation of the proximal adapter receptor-interacting RIPK2. Following recruitment, RIPK2 undergoes 'Met-1'- (linear) and 'Lys-63'-linked polyubiquitination by E3 ubiquitin-protein ligases XIAP, BIRC2, BIRC3 and the LUBAC complex, becoming a scaffolding protein for downstream effectors, triggering activation of the NF-kappa-B and MAP kinases signaling. This in turn leads to the transcriptional activation of hundreds of genes involved in immune response. Its ability to detect bacterial MDP plays a central role in maintaining the equilibrium between intestinal microbiota and host immune responses to control inflammation. An imbalance in this relationship results in dysbiosis, whereby pathogenic bacteria prevail on commensals, causing damage in the intestinal epithelial barrier as well as allowing bacterial invasion and inflammation. Acts as a regulator of appetite by sensing MDP in a subset of brain neurons: microbiota-derived MDP reach the brain, where they bind and activate NOD2 in inhibitory hypothalamic neurons, decreasing neuronal activity, thereby regulating satiety and body temperature. NOD2-dependent MDP-sensing of bacterial cell walls in the intestinal epithelial compartment contributes to sustained postnatal growth upon undernutrition. Also plays a role in antiviral response by acting as a sensor of single-stranded RNA (ssRNA) from viruses: upon ssRNA-binding, interacts with MAVS, leading to activation of interferon regulatory factor-3/IRF3 and expression of type I interferon. Also acts as a regulator of autophagy in dendritic cells via its interaction with ATG16L1, possibly by recruiting ATG16L1 at the site of bacterial entry. NOD2 activation in the small intestine crypt also contributes to intestinal stem cells survival and function: acts by promoting mitophagy via its association with ATG16L1. In addition to its main role in innate immunity, also regulates the adaptive immune system by acting as regulator of helper T-cell and regulatory T-cells (Tregs). Besides recognizing pathogens, also involved in the endoplasmic reticulum stress response: acts by sensing and binding to the cytosolic metabolite sphingosine-1-phosphate generated in response to endoplasmic reticulum stress, initiating an inflammation process that leads to activation of the NF-kappa-B and MAP kinases signaling. May also be involved in NLRP1 activation following activation by MDP, leading to CASP1 activation and IL1B release in macrophages. Functionally, acts as a pattern recognition receptor (PRR); able to activate NF-kappa-B. Its function is as follows. Can activate NF-kappa-B in a muramyl dipeptide (MDP)-independent manner. The chain is Nucleotide-binding oligomerization domain-containing protein 2 from Homo sapiens (Human).